A 154-amino-acid chain; its full sequence is Low molecular weight protein-tyrosine-phosphatase PtpA (154 aa).

Residue cysteine 8 is the Nucleophile of the active site. Residue arginine 14 is part of the active site. Aspartate 120 functions as the Proton donor in the catalytic mechanism.

The protein belongs to the low molecular weight phosphotyrosine protein phosphatase family.

The catalysed reaction is O-phospho-L-tyrosyl-[protein] + H2O = L-tyrosyl-[protein] + phosphate. Its function is as follows. Dephosphorylates the phosphotyrosine-containing proteins. The polypeptide is Low molecular weight protein-tyrosine-phosphatase PtpA (ptpA) (Staphylococcus epidermidis (strain ATCC 35984 / DSM 28319 / BCRC 17069 / CCUG 31568 / BM 3577 / RP62A)).